A 75-amino-acid chain; its full sequence is Small ribosomal subunit protein bS18 (75 aa).

Belongs to the bacterial ribosomal protein bS18 family. Part of the 30S ribosomal subunit. Forms a tight heterodimer with protein bS6.

Its function is as follows. Binds as a heterodimer with protein bS6 to the central domain of the 16S rRNA, where it helps stabilize the platform of the 30S subunit. The sequence is that of Small ribosomal subunit protein bS18 from Idiomarina loihiensis (strain ATCC BAA-735 / DSM 15497 / L2-TR).